A 605-amino-acid chain; its full sequence is UvrABC system protein C (605 aa).

The 79-residue stretch at 14 to 92 folds into the GIY-YIG domain; sequence QSCGVYKMIG…IKSLKPSYNI (79 aa). One can recognise a UVR domain in the interval 202-237; the sequence is KEVQRQLFSTMEKCSREMNYELAAVYRDRLKFLQQI.

Belongs to the UvrC family. As to quaternary structure, interacts with UvrB in an incision complex.

It is found in the cytoplasm. Functionally, the UvrABC repair system catalyzes the recognition and processing of DNA lesions. UvrC both incises the 5' and 3' sides of the lesion. The N-terminal half is responsible for the 3' incision and the C-terminal half is responsible for the 5' incision. The polypeptide is UvrABC system protein C (Wolbachia pipientis subsp. Culex pipiens (strain wPip)).